The following is a 113-amino-acid chain: Large ribosomal subunit protein uL22 (113 aa).

This sequence belongs to the universal ribosomal protein uL22 family. As to quaternary structure, part of the 50S ribosomal subunit.

Functionally, this protein binds specifically to 23S rRNA; its binding is stimulated by other ribosomal proteins, e.g. L4, L17, and L20. It is important during the early stages of 50S assembly. It makes multiple contacts with different domains of the 23S rRNA in the assembled 50S subunit and ribosome. In terms of biological role, the globular domain of the protein is located near the polypeptide exit tunnel on the outside of the subunit, while an extended beta-hairpin is found that lines the wall of the exit tunnel in the center of the 70S ribosome. This is Large ribosomal subunit protein uL22 from Bacillus subtilis (strain 168).